Reading from the N-terminus, the 591-residue chain is Aspartate--tRNA(Asp/Asn) ligase (591 aa).

Residue Glu-174 participates in L-aspartate binding. The segment at Gln-198–Lys-201 is aspartate. Arg-220 lines the L-aspartate pocket. Residues Arg-220 to Glu-222 and Gln-229 contribute to the ATP site. An L-aspartate-binding site is contributed by His-450. ATP is bound at residue Glu-483. L-aspartate is bound at residue Arg-490. Gly-535–Arg-538 contributes to the ATP binding site.

It belongs to the class-II aminoacyl-tRNA synthetase family. Type 1 subfamily. Homodimer.

It localises to the cytoplasm. The catalysed reaction is tRNA(Asx) + L-aspartate + ATP = L-aspartyl-tRNA(Asx) + AMP + diphosphate. In terms of biological role, aspartyl-tRNA synthetase with relaxed tRNA specificity since it is able to aspartylate not only its cognate tRNA(Asp) but also tRNA(Asn). Reaction proceeds in two steps: L-aspartate is first activated by ATP to form Asp-AMP and then transferred to the acceptor end of tRNA(Asp/Asn). In Pseudomonas aeruginosa (strain LESB58), this protein is Aspartate--tRNA(Asp/Asn) ligase.